Here is a 113-residue protein sequence, read N- to C-terminus: Retrotransposon Gag-like protein 8B (113 aa).

Belongs to the FAM127 family.

The protein is Retrotransposon Gag-like protein 8B (RTL8B) of Homo sapiens (Human).